The sequence spans 156 residues: Small ribosomal subunit protein uS7 (156 aa).

Belongs to the universal ribosomal protein uS7 family. As to quaternary structure, part of the 30S ribosomal subunit. Contacts proteins S9 and S11.

In terms of biological role, one of the primary rRNA binding proteins, it binds directly to 16S rRNA where it nucleates assembly of the head domain of the 30S subunit. Is located at the subunit interface close to the decoding center, probably blocks exit of the E-site tRNA. This is Small ribosomal subunit protein uS7 from Treponema pallidum (strain Nichols).